Here is a 748-residue protein sequence, read N- to C-terminus: Polyribonucleotide nucleotidyltransferase (748 aa).

Residues aspartate 522 and aspartate 528 each coordinate Mg(2+). The KH domain occupies 588 to 647; sequence PRVTTIRVPVDKIGEVIGPKGKIINAITEETGAQISIEDDGTVFVGATDGPSAQAAIDRI. The S1 motif domain maps to 659 to 728; that stretch reads GERFLGTVVK…KRGKISLVLV (70 aa).

It belongs to the polyribonucleotide nucleotidyltransferase family. The cofactor is Mg(2+).

It is found in the cytoplasm. It catalyses the reaction RNA(n+1) + phosphate = RNA(n) + a ribonucleoside 5'-diphosphate. In terms of biological role, involved in mRNA degradation. Catalyzes the phosphorolysis of single-stranded polyribonucleotides processively in the 3'- to 5'-direction. This is Polyribonucleotide nucleotidyltransferase from Mycobacterium avium (strain 104).